The chain runs to 139 residues: MGFGTLVAIGVIVFAVVVITIILCLTCSCCCLYKACRRPQPVVTTTTATTVVHAPYPQQQGVPPSYPAAPYQGYQPVAIQPQPGMPVAPYPAQYPPPYPMQPPDPPAYHETVAAGAGAPYPISQPPYNPAYMDPQKPTY.

A helical transmembrane segment spans residues 3–23; it reads FGTLVAIGVIVFAVVVITIIL.

It belongs to the shisa family.

It localises to the endoplasmic reticulum membrane. It is found in the nucleus membrane. Can induce apoptosis in a caspase-dependent manner and plays a role in p53/TP53-dependent apoptosis. This Gallus gallus (Chicken) protein is Protein shisa-5 (Shisa5).